Reading from the N-terminus, the 678-residue chain is RAS guanyl-releasing protein 4 (678 aa).

Basic residues-rich tracts occupy residues 1-10 (MNRKDIKRKS) and 20-32 (GHGR…RHKT). Disordered stretches follow at residues 1-33 (MNRK…HKTC) and 165-185 (GDAS…MSSP). Positions 49–175 (GVLSESSCSV…DASNLLSPGG (127 aa)) constitute an N-terminal Ras-GEF domain. One can recognise a Ras-GEF domain in the interval 201-432 (ETEELAQHLT…YELSYAREPR (232 aa)). Residues 466 to 501 (HVEQLVESVFKNYDPEGHGSISLEDFEKLSANFPFA) form the EF-hand domain. The Phorbol-ester/DAG-type zinc finger occupies 540–595 (LHAFQEVTFRKPTFCHSCNGFVSTGPLWGVTKRGYRCQDCGLCCHRHCRDQVRVEC). Disordered stretches follow at residues 598 to 620 (RPET…LPPT) and 651 to 678 (SSHS…KSSV). The segment covering 605–619 (PGPPGAPGPATPLPP) has biased composition (pro residues).

The protein belongs to the RASGRP family. In terms of tissue distribution, expressed by mast cells and their progenitors (at protein level).

It is found in the cytoplasm. Its subcellular location is the cell membrane. Functions as a cation- and diacylglycerol (DAG)-regulated nucleotide exchange factor activating Ras through the exchange of bound GDP for GTP. In neutrophils, participates in a phospholipase C-activating N-formyl peptide-activated GPCR (G protein-coupled receptor) signaling pathway by promoting Ras-mediated activation of PIK3CG/PI3Kgamma to promote neutrophil functional responses. In CD117(+) dendritic cells and mast cells, participates in an lipopolysaccharide (LPS)-activated signaling pathway that stimulates the production of interferon-gamma and other pro-inflammatory cytokines by natural killer (NK) cells. May function in mast cell differentiation. Does not appear to be required for the development of B-cells, DC-cells, T-cells, or NK-cells. The sequence is that of RAS guanyl-releasing protein 4 (Rasgrp4) from Rattus norvegicus (Rat).